The following is a 187-amino-acid chain: Adenine phosphoribosyltransferase (187 aa).

It belongs to the purine/pyrimidine phosphoribosyltransferase family. As to quaternary structure, homodimer.

Its subcellular location is the cytoplasm. The enzyme catalyses AMP + diphosphate = 5-phospho-alpha-D-ribose 1-diphosphate + adenine. Its pathway is purine metabolism; AMP biosynthesis via salvage pathway; AMP from adenine: step 1/1. Its function is as follows. Catalyzes a salvage reaction resulting in the formation of AMP, that is energically less costly than de novo synthesis. In Burkholderia pseudomallei (strain 1106a), this protein is Adenine phosphoribosyltransferase.